The following is a 293-amino-acid chain: Autophagy-related protein 36 (293 aa).

2 stretches are compositionally biased toward polar residues: residues 98 to 108 (ISSDSNKNSPP) and 260 to 273 (GETLNRSPSAASSS). Disordered regions lie at residues 98–121 (ISSDSNKNSPPSEQPAPALRNIRS) and 250–273 (SRSRFTDESTGETLNRSPSAASSS).

Interacts with PEX3, ATG8 and ATG11.

The protein resides in the peroxisome. In terms of biological role, required for autophagic breakdown of peroxisomes, called pexophagy, through linking peroxisomes to the autophagy apparatus. Involved in regulation of the glyoxylate cycle. In Saccharomyces cerevisiae (strain ATCC 204508 / S288c) (Baker's yeast), this protein is Autophagy-related protein 36 (ATG36).